The chain runs to 231 residues: Enolase-phosphatase E1 (231 aa).

Positions 206 to 231 (LLERPGNAPQPKHSHPKISSFENFNP) are disordered.

Belongs to the HAD-like hydrolase superfamily. MasA/MtnC family. In terms of assembly, monomer. It depends on Mg(2+) as a cofactor.

It carries out the reaction 5-methylsulfanyl-2,3-dioxopentyl phosphate + H2O = 1,2-dihydroxy-5-(methylsulfanyl)pent-1-en-3-one + phosphate. The protein operates within amino-acid biosynthesis; L-methionine biosynthesis via salvage pathway; L-methionine from S-methyl-5-thio-alpha-D-ribose 1-phosphate: step 3/6. It participates in amino-acid biosynthesis; L-methionine biosynthesis via salvage pathway; L-methionine from S-methyl-5-thio-alpha-D-ribose 1-phosphate: step 4/6. Functionally, bifunctional enzyme that catalyzes the enolization of 2,3-diketo-5-methylthiopentyl-1-phosphate (DK-MTP-1-P) into the intermediate 2-hydroxy-3-keto-5-methylthiopentenyl-1-phosphate (HK-MTPenyl-1-P), which is then dephosphorylated to form the acireductone 1,2-dihydroxy-3-keto-5-methylthiopentene (DHK-MTPene). The protein is Enolase-phosphatase E1 of Leptospira borgpetersenii serovar Hardjo-bovis (strain JB197).